The primary structure comprises 417 residues: UDP-N-acetylglucosamine 1-carboxyvinyltransferase (417 aa).

22–23 (KN) lines the phosphoenolpyruvate pocket. R92 serves as a coordination point for UDP-N-acetyl-alpha-D-glucosamine. C116 acts as the Proton donor in catalysis. The residue at position 116 (C116) is a 2-(S-cysteinyl)pyruvic acid O-phosphothioketal. 2 residues coordinate UDP-N-acetyl-alpha-D-glucosamine: D304 and V326.

The protein belongs to the EPSP synthase family. MurA subfamily.

Its subcellular location is the cytoplasm. The enzyme catalyses phosphoenolpyruvate + UDP-N-acetyl-alpha-D-glucosamine = UDP-N-acetyl-3-O-(1-carboxyvinyl)-alpha-D-glucosamine + phosphate. It participates in cell wall biogenesis; peptidoglycan biosynthesis. Its function is as follows. Cell wall formation. Adds enolpyruvyl to UDP-N-acetylglucosamine. In Syntrophotalea carbinolica (strain DSM 2380 / NBRC 103641 / GraBd1) (Pelobacter carbinolicus), this protein is UDP-N-acetylglucosamine 1-carboxyvinyltransferase.